The following is a 262-amino-acid chain: tRNA pseudouridine synthase A (262 aa).

Residue D51 is the Nucleophile of the active site. Y109 lines the substrate pocket.

This sequence belongs to the tRNA pseudouridine synthase TruA family. Homodimer.

It catalyses the reaction uridine(38/39/40) in tRNA = pseudouridine(38/39/40) in tRNA. In terms of biological role, formation of pseudouridine at positions 38, 39 and 40 in the anticodon stem and loop of transfer RNAs. The sequence is that of tRNA pseudouridine synthase A from Glaesserella parasuis serovar 5 (strain SH0165) (Haemophilus parasuis).